The primary structure comprises 200 residues: Small ribosomal subunit protein uS4 (200 aa).

The interval threonine 22–arginine 42 is disordered. One can recognise an S4 RNA-binding domain in the interval serine 92–lysine 152.

The protein belongs to the universal ribosomal protein uS4 family. Part of the 30S ribosomal subunit. Contacts protein S5. The interaction surface between S4 and S5 is involved in control of translational fidelity.

Functionally, one of the primary rRNA binding proteins, it binds directly to 16S rRNA where it nucleates assembly of the body of the 30S subunit. Its function is as follows. With S5 and S12 plays an important role in translational accuracy. In Geobacillus kaustophilus (strain HTA426), this protein is Small ribosomal subunit protein uS4.